Here is a 370-residue protein sequence, read N- to C-terminus: Propane 2-monooxygenase, reductase component (370 aa).

Over residues 1–14 (MAPRPLRRHPPLHH) the composition is skewed to basic residues. The tract at residues 1–21 (MAPRPLRRHPPLHHSFHESRR) is disordered. Positions 28–118 (HRINFEPVDI…DCTIELLNFD (91 aa)) constitute a 2Fe-2S ferredoxin-type domain. Positions 62, 67, 70, and 102 each coordinate [2Fe-2S] cluster. The region spanning 128–229 (IQDVRTRVTR…TGPYGSFTIK (102 aa)) is the FAD-binding FR-type domain.

It belongs to the TmoA/XamoA family. As to quaternary structure, the propane 2-monooxygenase multicomponent enzyme system is composed of an electron transfer component and a monooxygenase component interacting with the effector protein PrmD. The electron transfer component is composed of a reductase (PrmB), and the monooxygenase component is formed by a large subunit (PrmA) and a small subunit (PrmC). The cofactor is FAD. It depends on [2Fe-2S] cluster as a cofactor.

Its function is as follows. Reductase component of the propane 2-monooxygenase multicomponent enzyme system which is involved in the degradation of propane via the O2-dependent hydroxylation of propane. Reductase catalyzes the transfer of electrons from NADH or NADPH to monooxygenase. The sequence is that of Propane 2-monooxygenase, reductase component from Rhodococcus jostii (strain RHA1).